A 629-amino-acid polypeptide reads, in one-letter code: tRNA uridine 5-carboxymethylaminomethyl modification enzyme MnmG (629 aa).

FAD is bound by residues 13 to 18 (GGGHAG), V125, and S180. NAD(+) is bound at residue 273–287 (GPRYCPSIEDKVMRF). Q370 contacts FAD.

It belongs to the MnmG family. As to quaternary structure, homodimer. Heterotetramer of two MnmE and two MnmG subunits. FAD serves as cofactor.

It is found in the cytoplasm. NAD-binding protein involved in the addition of a carboxymethylaminomethyl (cmnm) group at the wobble position (U34) of certain tRNAs, forming tRNA-cmnm(5)s(2)U34. This is tRNA uridine 5-carboxymethylaminomethyl modification enzyme MnmG from Aliivibrio fischeri (strain ATCC 700601 / ES114) (Vibrio fischeri).